Reading from the N-terminus, the 284-residue chain is N-acylphosphatidylethanolamine synthase (284 aa).

The helical transmembrane segment at threonine 21–cysteine 37 threads the bilayer. The HXXXXD motif motif lies at histidine 67 to aspartate 72. The segment at glycine 122–tryptophan 163 is hydrophilic.

It belongs to the taffazin family. As to expression, essentially present in young tissues. Expressed in roots, cotyledons, leaves, and shoot and root apical meristems.

It localises to the cell membrane. Its function is as follows. Acyltransferase that catalyzes the N-acylation of phosphatidylethanolamine to form N-acylphosphatidylethanolamine (N-acyl-PE) (e.g. NAPEs containing C16:0, C16:1, C18:0, and C18:1). Also mediates the formation of acylphosphatidylglycerol (acyl-PG) from lysoglycerophospholipid by O-acylation. Uses acyl-CoA as acyl donors. Acylates 1-acyllysophosphatidylethanolamine (1-acyllyso-PE) and 1-acyllysophosphatidylglycerol (1-acyllyso-PG) at the sn-2-position. The polypeptide is N-acylphosphatidylethanolamine synthase (Arabidopsis thaliana (Mouse-ear cress)).